A 249-amino-acid polypeptide reads, in one-letter code: Eukaryotic translation initiation factor 3 subunit K (249 aa).

The 177-residue stretch at 46–222 folds into the PCI domain; that stretch reads FDCYANLALL…VKVPTNKENE (177 aa).

It belongs to the eIF-3 subunit K family. Component of the eukaryotic translation initiation factor 3 (eIF-3) complex.

Its subcellular location is the cytoplasm. Functionally, component of the eukaryotic translation initiation factor 3 (eIF-3) complex, which is involved in protein synthesis of a specialized repertoire of mRNAs and, together with other initiation factors, stimulates binding of mRNA and methionyl-tRNAi to the 40S ribosome. The eIF-3 complex specifically targets and initiates translation of a subset of mRNAs involved in cell proliferation. The polypeptide is Eukaryotic translation initiation factor 3 subunit K (Neosartorya fischeri (strain ATCC 1020 / DSM 3700 / CBS 544.65 / FGSC A1164 / JCM 1740 / NRRL 181 / WB 181) (Aspergillus fischerianus)).